Here is a 146-residue protein sequence, read N- to C-terminus: Large ribosomal subunit protein bL21 (146 aa).

Positions 115–146 (KSISLGKSAPKSSAKKETVKKETKPKSEKSTN) are disordered. Residues 128-146 (AKKETVKKETKPKSEKSTN) show a composition bias toward basic and acidic residues.

Belongs to the bacterial ribosomal protein bL21 family. As to quaternary structure, part of the 50S ribosomal subunit. Contacts protein L20.

Functionally, this protein binds to 23S rRNA in the presence of protein L20. This Prochlorococcus marinus (strain MIT 9312) protein is Large ribosomal subunit protein bL21.